Here is a 361-residue protein sequence, read N- to C-terminus: Peptide chain release factor 1 (361 aa).

At Q237 the chain carries N5-methylglutamine. The span at 287–297 (KQQKEQSDTRK) shows a compositional bias: basic and acidic residues. The tract at residues 287–313 (KQQKEQSDTRKSLVGSGDRSERIRTYN) is disordered.

It belongs to the prokaryotic/mitochondrial release factor family. In terms of processing, methylated by PrmC. Methylation increases the termination efficiency of RF1.

The protein resides in the cytoplasm. In terms of biological role, peptide chain release factor 1 directs the termination of translation in response to the peptide chain termination codons UAG and UAA. This Francisella tularensis subsp. tularensis (strain FSC 198) protein is Peptide chain release factor 1.